Reading from the N-terminus, the 269-residue chain is Leucinostatins biosynthesis cluster protein T (269 aa).

The N-terminal stretch at 1–15 (MHIILTGTGLVGAIA) is a signal peptide. A glycan (N-linked (GlcNAc...) asparagine) is linked at Asn-254.

Its function is as follows. Part of the gene cluster that mediates the biosynthesis of the lipopeptide antibiotics leucinostatins that show extensive biological activities, including antimalarial, antiviral, antibacterial, antifungal, and antitumor activities, as well as phytotoxic. The function of lcsT within the leucinostatins biosynthesis has not been identified yet. The protein is Leucinostatins biosynthesis cluster protein T of Purpureocillium lilacinum (Paecilomyces lilacinus).